A 585-amino-acid chain; its full sequence is Pre-mRNA-splicing factor sap145 (585 aa).

The stretch at 1 to 74 (MAEIQTAQNP…NNDNLYNDKK (74 aa)) forms a coiled coil. A disordered region spans residues 1 to 84 (MAEIQTAQNP…SNGNFYDTNK (84 aa)). A compositionally biased stretch (basic and acidic residues) spans 12 to 22 (KELEKILERNN). A compositionally biased stretch (basic residues) spans 23 to 41 (KQKNKKSRNQVRREKKKLL). A compositionally biased stretch (basic and acidic residues) spans 51–62 (LAEKNSDDKDQL). At Ser-145 the chain carries Phosphoserine. The tract at residues 400–460 (IHAGTGSPVS…SASEPRSQRE (61 aa)) is disordered. Over residues 416–439 (LEEFEEEESSEEEESEDVEYPTEE) the composition is skewed to acidic residues.

In terms of assembly, belongs to the 40S cdc5-associated complex (or cwf complex), a spliceosome sub-complex reminiscent of a late-stage spliceosome composed of the U2, U5 and U6 snRNAs and at least brr2, cdc5, cwf2/prp3, cwf3/syf1, cwf4/syf3, cwf5/ecm2, spp42/cwf6, cwf7/spf27, cwf8, cwf9, cwf10, cwf11, cwf12, prp45/cwf13, cwf14, cwf15, cwf16, cwf17, cwf18, cwf19, cwf20, cwf21, cwf22, cwf23, cwf24, cwf25, cwf26, cyp7/cwf27, cwf28, cwf29/ist3, lea1, msl1, prp5/cwf1, prp10/sap155, prp12/sap130, prp17, prp22, sap61, sap62, sap114, sap145, slu7, smb1, smd1, smd3, smf1, smg1 and syf2. Sap145 is part of the SF3b subcomplex of the Prp19-associated nineteen complex (NTC), composed of ini1, prp10, prp12/sap130, sap10/sap155, sap14, sap49 and sap145. Part of the U2 snRNP.

It localises to the nucleus. The protein resides in the cytoplasm. Involved in pre-mRNA splicing. May be involved in endoplasmic reticulum-associated protein degradation (ERAD) and required for growth at low and high temperatures. This Schizosaccharomyces pombe (strain 972 / ATCC 24843) (Fission yeast) protein is Pre-mRNA-splicing factor sap145 (sap145).